Here is a 548-residue protein sequence, read N- to C-terminus: Chaperonin GroEL (548 aa).

Residues 30–33 (TLGP), Lys51, 87–91 (DGTTT), Gly415, 479–481 (NAA), and Asp495 each bind ATP. A disordered region spans residues 526-548 (KEDKSSDLGSAPAGGMGGMGGMM). Residues 537–548 (PAGGMGGMGGMM) are compositionally biased toward gly residues.

This sequence belongs to the chaperonin (HSP60) family. Forms a cylinder of 14 subunits composed of two heptameric rings stacked back-to-back. Interacts with the co-chaperonin GroES.

It localises to the cytoplasm. The catalysed reaction is ATP + H2O + a folded polypeptide = ADP + phosphate + an unfolded polypeptide.. Functionally, together with its co-chaperonin GroES, plays an essential role in assisting protein folding. The GroEL-GroES system forms a nano-cage that allows encapsulation of the non-native substrate proteins and provides a physical environment optimized to promote and accelerate protein folding. This is Chaperonin GroEL from Buchnera aphidicola subsp. Pterocomma populeum.